Here is a 242-residue protein sequence, read N- to C-terminus: UPF0246 protein SPCG_1533 (242 aa).

It belongs to the UPF0246 family.

The protein is UPF0246 protein SPCG_1533 of Streptococcus pneumoniae (strain CGSP14).